The chain runs to 301 residues: MQKFDTKTFQGLILTLQDYWARQGCTIVQPLDMEVGAGTSHPMTCLRALGPEPIAAAYVQPSRRPTDGRYGENPNRLQHYYQFQVIIKPSPDNIQELYLGSLRELGLDPTIHDIRFVEDNWENPTLGAWGLGWEVWLNGMEVTQFTYFQQVGGLECKPVTGEITYGLERLAMYIQGVDSVYDLVWCDGPLGKTTYGDIYHQNEVEQSTYNFEYADVDFLFSCFEQYEKEARELLELEKPLPLPAYERILKAGHTFNLLDARKAISVTERQRYILRIRTLTKAVAEAYYASREALGFPMCKK.

It belongs to the class-II aminoacyl-tRNA synthetase family. As to quaternary structure, tetramer of two alpha and two beta subunits.

The protein resides in the cytoplasm. The enzyme catalyses tRNA(Gly) + glycine + ATP = glycyl-tRNA(Gly) + AMP + diphosphate. The chain is Glycine--tRNA ligase alpha subunit from Proteus mirabilis (strain HI4320).